The following is a 475-amino-acid chain: Enolase (475 aa).

Position 179 (Gln-179) interacts with (2R)-2-phosphoglycerate. The active-site Proton donor is Glu-221. Residues Asp-258, Glu-312, and Asp-339 each coordinate Mg(2+). Positions 364, 393, 394, and 415 each coordinate (2R)-2-phosphoglycerate. Catalysis depends on Lys-364, which acts as the Proton acceptor. The tract at residues 454-475 (STPAATPKKSPAKKTTKAKSKK) is disordered. A compositionally biased stretch (basic residues) spans 463–475 (SPAKKTTKAKSKK).

The protein belongs to the enolase family. It depends on Mg(2+) as a cofactor.

The protein resides in the cell membrane. It localises to the cytoplasm. The protein localises to the secreted. It is found in the cell surface. It carries out the reaction (2R)-2-phosphoglycerate = phosphoenolpyruvate + H2O. The protein operates within carbohydrate degradation; glycolysis; pyruvate from D-glyceraldehyde 3-phosphate: step 4/5. In terms of biological role, catalyzes the reversible conversion of 2-phosphoglycerate (2-PG) into phosphoenolpyruvate (PEP). It is essential for the degradation of carbohydrates via glycolysis. Its function is as follows. 'Moonlights' as a plasminogen receptor. Binds host (chicken) plasminogen; enolase antiserum inhibits M.gallisepticum adherence to chicken embryo fibroblasts. In Mycoplasmoides gallisepticum (strain R(low / passage 15 / clone 2)) (Mycoplasma gallisepticum), this protein is Enolase.